A 200-amino-acid polypeptide reads, in one-letter code: Small ribosomal subunit protein uS4c (200 aa).

In terms of domain architecture, S4 RNA-binding spans 90–150 (MRLDNIIFRL…NRKESVIIKN (61 aa)).

Belongs to the universal ribosomal protein uS4 family. In terms of assembly, part of the 30S ribosomal subunit. Contacts protein S5. The interaction surface between S4 and S5 is involved in control of translational fidelity.

The protein resides in the plastid. It localises to the chloroplast. Its function is as follows. One of the primary rRNA binding proteins, it binds directly to 16S rRNA where it nucleates assembly of the body of the 30S subunit. With S5 and S12 plays an important role in translational accuracy. In Pellia neesiana (Liverwort), this protein is Small ribosomal subunit protein uS4c (rps4).